The primary structure comprises 273 residues: Ribosomal RNA small subunit methyltransferase A (273 aa).

S-adenosyl-L-methionine-binding residues include His-10, Leu-12, Gly-37, Glu-58, Asp-83, and Asn-108.

The protein belongs to the class I-like SAM-binding methyltransferase superfamily. rRNA adenine N(6)-methyltransferase family. RsmA subfamily.

It localises to the cytoplasm. It carries out the reaction adenosine(1518)/adenosine(1519) in 16S rRNA + 4 S-adenosyl-L-methionine = N(6)-dimethyladenosine(1518)/N(6)-dimethyladenosine(1519) in 16S rRNA + 4 S-adenosyl-L-homocysteine + 4 H(+). Specifically dimethylates two adjacent adenosines (A1518 and A1519) in the loop of a conserved hairpin near the 3'-end of 16S rRNA in the 30S particle. May play a critical role in biogenesis of 30S subunits. The polypeptide is Ribosomal RNA small subunit methyltransferase A (Picosynechococcus sp. (strain ATCC 27264 / PCC 7002 / PR-6) (Agmenellum quadruplicatum)).